Here is a 266-residue protein sequence, read N- to C-terminus: Glutamate racemase (266 aa).

Residues 9–10 (DS) and 41–42 (YG) contribute to the substrate site. Cys72 acts as the Proton donor/acceptor in catalysis. 73-74 (NT) is a substrate binding site. Cys184 (proton donor/acceptor) is an active-site residue. Residue 185 to 186 (TH) participates in substrate binding.

This sequence belongs to the aspartate/glutamate racemases family.

It carries out the reaction L-glutamate = D-glutamate. It participates in cell wall biogenesis; peptidoglycan biosynthesis. In terms of biological role, provides the (R)-glutamate required for cell wall biosynthesis. The protein is Glutamate racemase of Staphylococcus aureus (strain Mu3 / ATCC 700698).